Here is a 260-residue protein sequence, read N- to C-terminus: Indole-3-glycerol phosphate synthase (260 aa).

It belongs to the TrpC family.

The enzyme catalyses 1-(2-carboxyphenylamino)-1-deoxy-D-ribulose 5-phosphate + H(+) = (1S,2R)-1-C-(indol-3-yl)glycerol 3-phosphate + CO2 + H2O. It participates in amino-acid biosynthesis; L-tryptophan biosynthesis; L-tryptophan from chorismate: step 4/5. The protein is Indole-3-glycerol phosphate synthase of Bacteroides thetaiotaomicron (strain ATCC 29148 / DSM 2079 / JCM 5827 / CCUG 10774 / NCTC 10582 / VPI-5482 / E50).